A 430-amino-acid chain; its full sequence is Tol-Pal system protein TolB (430 aa).

Residues 1 to 21 (MRRFVTLLIALLCLSATAVQA) form the signal peptide.

Belongs to the TolB family. As to quaternary structure, the Tol-Pal system is composed of five core proteins: the inner membrane proteins TolA, TolQ and TolR, the periplasmic protein TolB and the outer membrane protein Pal. They form a network linking the inner and outer membranes and the peptidoglycan layer.

Its subcellular location is the periplasm. Its function is as follows. Part of the Tol-Pal system, which plays a role in outer membrane invagination during cell division and is important for maintaining outer membrane integrity. The polypeptide is Tol-Pal system protein TolB (Syntrophotalea carbinolica (strain DSM 2380 / NBRC 103641 / GraBd1) (Pelobacter carbinolicus)).